The primary structure comprises 341 residues: UDP-N-acetylenolpyruvoylglucosamine reductase (341 aa).

An FAD-binding PCMH-type domain is found at L15 to R185. Residue R161 is part of the active site. S231 functions as the Proton donor in the catalytic mechanism. E327 is a catalytic residue.

This sequence belongs to the MurB family. FAD is required as a cofactor.

It is found in the cytoplasm. It catalyses the reaction UDP-N-acetyl-alpha-D-muramate + NADP(+) = UDP-N-acetyl-3-O-(1-carboxyvinyl)-alpha-D-glucosamine + NADPH + H(+). It functions in the pathway cell wall biogenesis; peptidoglycan biosynthesis. In terms of biological role, cell wall formation. This Shewanella baltica (strain OS195) protein is UDP-N-acetylenolpyruvoylglucosamine reductase.